The primary structure comprises 284 residues: Small ribosomal subunit protein uS5 (284 aa).

Over residues 1–10 (MMADEKKTPE) the composition is skewed to basic and acidic residues. Positions 1–105 (MMADEKKTPE…DNRRGGRREE (105 aa)) are disordered. The segment covering 14-23 (ETATPAVAVE) has biased composition (low complexity). Basic and acidic residues predominate over residues 24–43 (DALKAEPTETLEAQKAKAEA). Positions 44-67 (ETPAVAETPSEAAANQSAAQGAEG) are enriched in low complexity. The span at 68–105 (QPRERGGHDRGGRGGRGGNDRGRGRGGRDNRRGGRREE) shows a compositional bias: basic and acidic residues. The S5 DRBM domain occupies 110–173 (IIEKLVHINR…AAARKKMIRV (64 aa)). The disordered stretch occupies residues 246 to 284 (DQTSPKSVAQRRGKKVADLLGRGGASEAEAEADAAAIAE).

Belongs to the universal ribosomal protein uS5 family. Part of the 30S ribosomal subunit. Contacts proteins S4 and S8.

In terms of biological role, with S4 and S12 plays an important role in translational accuracy. Functionally, located at the back of the 30S subunit body where it stabilizes the conformation of the head with respect to the body. The chain is Small ribosomal subunit protein uS5 from Erythrobacter litoralis (strain HTCC2594).